We begin with the raw amino-acid sequence, 324 residues long: Olfactory receptor 5T17 (324 aa).

At 1-37 (MPRTPSYTNTKTTQVNNVTEITVFILLGFTDDVDMNI) the chain is on the extracellular side. N-linked (GlcNAc...) asparagine glycosylation occurs at Asn17. The helical transmembrane segment at 38 to 58 (FLFILFLAIYVVTLIGNLGLV) threads the bilayer. The Cytoplasmic segment spans residues 59–66 (VLVIEDSR). Residues 67–87 (LHNPMYYFLTVLSSLDACFSS) traverse the membrane as a helical segment. The Extracellular segment spans residues 88 to 111 (VLTPKMLVNFLSKNKSISFAGCAT). The N-linked (GlcNAc...) asparagine glycan is linked to Asn101. An intrachain disulfide couples Cys109 to Cys201. A helical membrane pass occupies residues 112–132 (QMLLFVTFGTTECFLLAAMAY). At 133-145 (DRYLAIYSPLLYA) the chain is on the cytoplasmic side. A helical transmembrane segment spans residues 146–166 (VRMSPRVYVPLIIASYTGGIL). Residues 167-208 (HATIHTVATFSLSFCGSNEIRHVFCDIPPLLALSCSDTHLNQ) are Extracellular-facing. The helical transmembrane segment at 209 to 229 (LLLFYCAGSIELITILIVLVS) threads the bilayer. Topologically, residues 230-249 (YGFVLLAILKINSAEGRRKI) are cytoplasmic. Residues 250–270 (FSTCGAHLTGVSIFHGTILFM) traverse the membrane as a helical segment. The Extracellular portion of the chain corresponds to 271–283 (YVRPSSNYTLEQD). A glycan (N-linked (GlcNAc...) asparagine) is linked at Asn277. A helical transmembrane segment spans residues 284–304 (MVVSTFYTIVIPMLNPIIYSL). The Cytoplasmic segment spans residues 305 to 324 (RNKDVKEAMRKLLKRKLVHE).

This sequence belongs to the G-protein coupled receptor 1 family.

The protein resides in the cell membrane. In terms of biological role, potential odorant receptor. The sequence is that of Olfactory receptor 5T17 from Mus musculus (Mouse).